A 239-amino-acid polypeptide reads, in one-letter code: ATP-dependent dethiobiotin synthetase BioD (239 aa).

Position 15–20 (Glu15–Phe20) interacts with ATP. Thr19 is a Mg(2+) binding site. Lys40 is an active-site residue. ATP is bound by residues Asp57, Glu118–Gly121, and Asn178–His179. Residues Asp57 and Glu118 each coordinate Mg(2+).

Belongs to the dethiobiotin synthetase family. As to quaternary structure, homodimer. Requires Mg(2+) as cofactor.

It localises to the cytoplasm. It catalyses the reaction (7R,8S)-7,8-diammoniononanoate + CO2 + ATP = (4R,5S)-dethiobiotin + ADP + phosphate + 3 H(+). Its pathway is cofactor biosynthesis; biotin biosynthesis; biotin from 7,8-diaminononanoate: step 1/2. Catalyzes a mechanistically unusual reaction, the ATP-dependent insertion of CO2 between the N7 and N8 nitrogen atoms of 7,8-diaminopelargonic acid (DAPA, also called 7,8-diammoniononanoate) to form a ureido ring. The polypeptide is ATP-dependent dethiobiotin synthetase BioD (Burkholderia cenocepacia (strain ATCC BAA-245 / DSM 16553 / LMG 16656 / NCTC 13227 / J2315 / CF5610) (Burkholderia cepacia (strain J2315))).